We begin with the raw amino-acid sequence, 508 residues long: ATP synthase subunit alpha, mitochondrial (508 aa).

An ATP-binding site is contributed by 171-178; that stretch reads GDRQTGKT.

Belongs to the ATPase alpha/beta chains family. F-type ATPases have 2 components, CF(1) - the catalytic core - and CF(0) - the membrane proton channel. CF(1) has five subunits: alpha(3), beta(3), gamma(1), delta(1), epsilon(1). CF(0) has three main subunits: a, b and c.

The protein resides in the mitochondrion. It localises to the mitochondrion inner membrane. Its function is as follows. Mitochondrial membrane ATP synthase (F(1)F(0) ATP synthase or Complex V) produces ATP from ADP in the presence of a proton gradient across the membrane which is generated by electron transport complexes of the respiratory chain. F-type ATPases consist of two structural domains, F(1) - containing the extramembraneous catalytic core, and F(0) - containing the membrane proton channel, linked together by a central stalk and a peripheral stalk. During catalysis, ATP synthesis in the catalytic domain of F(1) is coupled via a rotary mechanism of the central stalk subunits to proton translocation. Subunits alpha and beta form the catalytic core in F(1). Rotation of the central stalk against the surrounding alpha(3)beta(3) subunits leads to hydrolysis of ATP in three separate catalytic sites on the beta subunits. Subunit alpha does not bear the catalytic high-affinity ATP-binding sites. The chain is ATP synthase subunit alpha, mitochondrial (ATPA) from Phaseolus vulgaris (Kidney bean).